Here is a 145-residue protein sequence, read N- to C-terminus: D-aminoacyl-tRNA deacylase (145 aa).

Positions Gly137–Pro138 match the Gly-cisPro motif, important for rejection of L-amino acids motif.

The protein belongs to the DTD family. As to quaternary structure, homodimer.

It localises to the cytoplasm. It carries out the reaction glycyl-tRNA(Ala) + H2O = tRNA(Ala) + glycine + H(+). The catalysed reaction is a D-aminoacyl-tRNA + H2O = a tRNA + a D-alpha-amino acid + H(+). Functionally, an aminoacyl-tRNA editing enzyme that deacylates mischarged D-aminoacyl-tRNAs. Also deacylates mischarged glycyl-tRNA(Ala), protecting cells against glycine mischarging by AlaRS. Acts via tRNA-based rather than protein-based catalysis; rejects L-amino acids rather than detecting D-amino acids in the active site. By recycling D-aminoacyl-tRNA to D-amino acids and free tRNA molecules, this enzyme counteracts the toxicity associated with the formation of D-aminoacyl-tRNA entities in vivo and helps enforce protein L-homochirality. The sequence is that of D-aminoacyl-tRNA deacylase from Salmonella choleraesuis (strain SC-B67).